Here is a 267-residue protein sequence, read N- to C-terminus: Putative transcription factor Ovo-like 1 (267 aa).

C2H2-type zinc fingers lie at residues 118 to 140, 146 to 168, 174 to 197, and 213 to 235; these read FTCR…MKCH, HLCT…VRTH, YKCS…KKIH, and YVCE…LKEH.

As to expression, expressed in fetal kidney, and also in adult pancreas and placenta. Not expressed in intestine, peripheral blood lymphocytes and ovary.

The protein resides in the nucleus. Functionally, putative transcription factor. Involved in hair formation and spermatogenesis. May function in the differentiation and/or maintenance of the urogenital system. The sequence is that of Putative transcription factor Ovo-like 1 (OVOL1) from Homo sapiens (Human).